Consider the following 401-residue polypeptide: Argininosuccinate synthase (401 aa).

8–16 (AYSGGLDTS) contributes to the ATP binding site. Residue Y85 coordinates L-citrulline. G115 is a binding site for ATP. 3 residues coordinate L-aspartate: T117, N121, and D122. An L-citrulline-binding site is contributed by N121. R125, S173, E258, and Y270 together coordinate L-citrulline.

The protein belongs to the argininosuccinate synthase family. Type 1 subfamily. As to quaternary structure, homotetramer.

The protein resides in the cytoplasm. It catalyses the reaction L-citrulline + L-aspartate + ATP = 2-(N(omega)-L-arginino)succinate + AMP + diphosphate + H(+). It functions in the pathway amino-acid biosynthesis; L-arginine biosynthesis; L-arginine from L-ornithine and carbamoyl phosphate: step 2/3. In Staphylococcus epidermidis (strain ATCC 35984 / DSM 28319 / BCRC 17069 / CCUG 31568 / BM 3577 / RP62A), this protein is Argininosuccinate synthase.